The primary structure comprises 101 residues: Large ribosomal subunit protein uL23c (101 aa).

It belongs to the universal ribosomal protein uL23 family. Part of the 50S ribosomal subunit.

Its subcellular location is the plastid. It is found in the chloroplast. Functionally, binds to 23S rRNA. This chain is Large ribosomal subunit protein uL23c (rpl23), found in Cyanidium caldarium (Red alga).